Here is a 188-residue protein sequence, read N- to C-terminus: Adenine phosphoribosyltransferase (188 aa).

It belongs to the purine/pyrimidine phosphoribosyltransferase family. As to quaternary structure, homodimer.

Its subcellular location is the cytoplasm. It carries out the reaction AMP + diphosphate = 5-phospho-alpha-D-ribose 1-diphosphate + adenine. It participates in purine metabolism; AMP biosynthesis via salvage pathway; AMP from adenine: step 1/1. In terms of biological role, catalyzes a salvage reaction resulting in the formation of AMP, that is energically less costly than de novo synthesis. The sequence is that of Adenine phosphoribosyltransferase from Burkholderia ambifaria (strain MC40-6).